The following is a 481-amino-acid chain: Autolysin (481 aa).

In terms of domain architecture, Peptidase C51 spans 7–142; the sequence is KNEFIERLKT…LQDDNMLMIS (136 aa). The 126-residue stretch at 198-323 folds into the N-acetylmuramoyl-L-alanine amidase domain; sequence SNPKGIVIHN…NEFTSTSCPH (126 aa). One can recognise an SH3b domain in the interval 398–466; it reads EESARFTNGN…YLPIRTWNGS (69 aa).

The protein belongs to the N-acetylmuramoyl-L-alanine amidase 2 family.

The protein localises to the secreted. It carries out the reaction Hydrolyzes the link between N-acetylmuramoyl residues and L-amino acid residues in certain cell-wall glycopeptides.. Its function is as follows. Autolysins are involved in some important biological processes such as cell separation, cell-wall turnover, competence for genetic transformation, formation of the flagella and sporulation. Autolysin strictly depends on the presence of choline-containing cell walls for activity. This is Autolysin (lytA) from Staphylococcus aureus.